We begin with the raw amino-acid sequence, 123 residues long: Holo-[acyl-carrier-protein] synthase (123 aa).

The Mg(2+) site is built by Asp-8 and Glu-56.

Belongs to the P-Pant transferase superfamily. AcpS family. Mg(2+) serves as cofactor.

It is found in the cytoplasm. The catalysed reaction is apo-[ACP] + CoA = holo-[ACP] + adenosine 3',5'-bisphosphate + H(+). Functionally, transfers the 4'-phosphopantetheine moiety from coenzyme A to a Ser of acyl-carrier-protein. This is Holo-[acyl-carrier-protein] synthase from Clostridium botulinum (strain Eklund 17B / Type B).